Here is a 714-residue protein sequence, read N- to C-terminus: MGRRSAAPTSPFGEPRKFDPKFKGPIGKRHCTDVLCCIIFVVVILGYIALGVVAWIHGDPRKIIYPTDSYGQFCGQKGTPNENKTILMYFNILRCASPVVLINLQCPTTQLCVSKCPDRFATYLDMQANRFNNSYWEYYKQFCKPGFDKPRKSITEVLRDEDCPSMIIPSRPFLQRCFPDFSTRNGVLTVANKTEFKDGIGQMRNVTDLRSAANGINNVLDARSVGMKIFEDYASSWYWILIALFIAMVVSLLFLILLRFTAGVFFWIFIIGVIGVVGYGIWHCFWEYDSLKGVPGADLTIYDIGLQTDFRVYLQLRQTWLAFMILLCIVEVIIILMLIFLRNRIRIAIALLQEGSRAIGYIMSTLFYPIITFILIAICISYWAVTAVFMATSGEPIYKVMANKTLCKYADITCIPETFNTTNVTRLCPGAQCTFAFYGGESFYHQYILIFQLCNVFVFLWLVNFSIALGQCTLAGAFASYYWAFKKPADIPACPLFSSFGRAIRYHTGSLALGSLILALVQFIRIILEYLDHKLKASQNSFAKFILCCLKCCFWCLEKFIKFMNRNAYIMIAIYGKNFCTSAKDAFFLLMRNVIRVAVLDKVTDFLLFLGKVFVTGSVGVLAFFFFTRKIPVLTDEAPALNYYWVPLLTVLIGSYLIAHGFFSVYAMCVDTLFLCFCEDLERNNGSSSKPYYMSPNLHRILGKKEILSKKAKR.

Topologically, residues 1-33 (MGRRSAAPTSPFGEPRKFDPKFKGPIGKRHCTD) are cytoplasmic. Residues 34 to 54 (VLCCIIFVVVILGYIALGVVA) form a helical membrane-spanning segment. Residues 55–237 (WIHGDPRKII…KIFEDYASSW (183 aa)) lie on the Extracellular side of the membrane. Residues Asn-83, Asn-132, Asn-192, and Asn-205 are each glycosylated (N-linked (GlcNAc...) asparagine). The helical transmembrane segment at 238–258 (YWILIALFIAMVVSLLFLILL) threads the bilayer. The Cytoplasmic portion of the chain corresponds to 259–261 (RFT). The helical transmembrane segment at 262-282 (AGVFFWIFIIGVIGVVGYGIW) threads the bilayer. Residues 283-320 (HCFWEYDSLKGVPGADLTIYDIGLQTDFRVYLQLRQTW) are Extracellular-facing. A helical membrane pass occupies residues 321–341 (LAFMILLCIVEVIIILMLIFL). At 342–346 (RNRIR) the chain is on the cytoplasmic side. A helical membrane pass occupies residues 347–367 (IAIALLQEGSRAIGYIMSTLF). The Extracellular segment spans residues 368–369 (YP). The helical transmembrane segment at 370–390 (IITFILIAICISYWAVTAVFM) threads the bilayer. The Cytoplasmic portion of the chain corresponds to 391–455 (ATSGEPIYKV…QYILIFQLCN (65 aa)). Residues 456-476 (VFVFLWLVNFSIALGQCTLAG) form a helical membrane-spanning segment. Over 477-510 (AFASYYWAFKKPADIPACPLFSSFGRAIRYHTGS) the chain is Extracellular. The chain crosses the membrane as a helical span at residues 511–531 (LALGSLILALVQFIRIILEYL). The Cytoplasmic segment spans residues 532 to 605 (DHKLKASQNS…RVAVLDKVTD (74 aa)). A helical membrane pass occupies residues 606–626 (FLLFLGKVFVTGSVGVLAFFF). At 627 to 644 (FTRKIPVLTDEAPALNYY) the chain is on the extracellular side. The helical transmembrane segment at 645–665 (WVPLLTVLIGSYLIAHGFFSV) threads the bilayer. Residues 666-711 (YAMCVDTLFLCFCEDLERNNGSSSKPYYMSPNLHRILGKKEILSKK) lie on the Cytoplasmic side of the membrane.

Belongs to the CTL (choline transporter-like) family.

Its subcellular location is the cell membrane. It carries out the reaction choline(out) + n H(+)(in) = choline(in) + n H(+)(out). Choline/H+ antiporter. This Xenopus tropicalis (Western clawed frog) protein is Choline transporter-like protein 5 (slc44a5).